The following is a 225-amino-acid chain: uncharacterized protein (225 aa).

The tract at residues 32–82 (PKDKKKQNDTENKKKQPKDGENDKQKEQAETQPFEWIQQKDADDKKESNTA) is disordered. Basic and acidic residues-rich tracts occupy residues 37–60 (KQND…KEQA) and 69–79 (QQKDADDKKES).

Belongs to the MG067/MG068/MG395 family.

This is an uncharacterized protein from Mycoplasma pneumoniae (strain ATCC 29342 / M129 / Subtype 1) (Mycoplasmoides pneumoniae).